A 38-amino-acid polypeptide reads, in one-letter code: MSGPNPNKEPVDLNRTSLFWGLLLIFVLAVLFSSYFFN.

Residues 17-37 traverse the membrane as a helical segment; that stretch reads SLFWGLLLIFVLAVLFSSYFF.

The protein belongs to the PsbL family. As to quaternary structure, PSII is composed of 1 copy each of membrane proteins PsbA, PsbB, PsbC, PsbD, PsbE, PsbF, PsbH, PsbI, PsbJ, PsbK, PsbL, PsbM, PsbT, PsbX, PsbY, PsbZ, Psb30/Ycf12, at least 3 peripheral proteins of the oxygen-evolving complex and a large number of cofactors. It forms dimeric complexes.

The protein resides in the plastid. Its subcellular location is the chloroplast thylakoid membrane. One of the components of the core complex of photosystem II (PSII). PSII is a light-driven water:plastoquinone oxidoreductase that uses light energy to abstract electrons from H(2)O, generating O(2) and a proton gradient subsequently used for ATP formation. It consists of a core antenna complex that captures photons, and an electron transfer chain that converts photonic excitation into a charge separation. This subunit is found at the monomer-monomer interface and is required for correct PSII assembly and/or dimerization. The sequence is that of Photosystem II reaction center protein L from Porphyra purpurea (Red seaweed).